A 400-amino-acid chain; its full sequence is Na(+)/H(+) antiporter NhaA (400 aa).

A run of 11 helical transmembrane segments spans residues 26 to 46 (AGGILLLFSAVVAMLLANSPL), 71 to 91 (LIHWINDGFMAVFFVLVGMEV), 107 to 127 (IFPAIAAIGGMVIPAVVYWFI), 137 to 157 (GWAIPMATDIAFALGIMALLS), 166 to 186 (IFLLALAIIDDLGAIVVIALF), 189 to 209 (HGLSVQALIFSAVAIIVLILL), 225 to 245 (AILWASVLKSGVHATLAGVII), 273 to 293 (FVILPLFAFANAGVSFAGIDV), 299 to 319 (PLLLAIASGLIIGKPVGIFGF), 340 to 360 (IFAVAVLCGIGFTMSMFLASL), and 373 to 393 (LSRLGILLGSTVSAILGYLFL).

It belongs to the NhaA Na(+)/H(+) (TC 2.A.33) antiporter family.

Its subcellular location is the cell inner membrane. The catalysed reaction is Na(+)(in) + 2 H(+)(out) = Na(+)(out) + 2 H(+)(in). Functionally, na(+)/H(+) antiporter that extrudes sodium in exchange for external protons. In Haemophilus influenzae (strain ATCC 51907 / DSM 11121 / KW20 / Rd), this protein is Na(+)/H(+) antiporter NhaA.